The primary structure comprises 440 residues: tRNA-2-methylthio-N(6)-dimethylallyladenosine synthase (440 aa).

In terms of domain architecture, MTTase N-terminal spans 2–118 (PKYYIITYGC…LPKILESLDG (117 aa)). Residues Cys11, Cys47, Cys81, Cys155, Cys159, and Cys162 each coordinate [4Fe-4S] cluster. The Radical SAM core domain occupies 141–370 (RENKFQAWIP…ENLQRKIIYE (230 aa)). In terms of domain architecture, TRAM spans 373–436 (LSRVGKEEIV…LWSLKGEVIR (64 aa)).

Belongs to the methylthiotransferase family. MiaB subfamily. In terms of assembly, monomer. It depends on [4Fe-4S] cluster as a cofactor.

The protein localises to the cytoplasm. The enzyme catalyses N(6)-dimethylallyladenosine(37) in tRNA + (sulfur carrier)-SH + AH2 + 2 S-adenosyl-L-methionine = 2-methylsulfanyl-N(6)-dimethylallyladenosine(37) in tRNA + (sulfur carrier)-H + 5'-deoxyadenosine + L-methionine + A + S-adenosyl-L-homocysteine + 2 H(+). Functionally, catalyzes the methylthiolation of N6-(dimethylallyl)adenosine (i(6)A), leading to the formation of 2-methylthio-N6-(dimethylallyl)adenosine (ms(2)i(6)A) at position 37 in tRNAs that read codons beginning with uridine. The chain is tRNA-2-methylthio-N(6)-dimethylallyladenosine synthase from Dictyoglomus thermophilum (strain ATCC 35947 / DSM 3960 / H-6-12).